We begin with the raw amino-acid sequence, 468 residues long: Ribulose bisphosphate carboxylase large chain (468 aa).

N6,N6,N6-trimethyllysine is present on lysine 5. Residues asparagine 114 and threonine 164 each coordinate substrate. The Proton acceptor role is filled by lysine 166. Lysine 168 contacts substrate. Residues lysine 192, aspartate 194, and glutamate 195 each contribute to the Mg(2+) site. Lysine 192 carries the post-translational modification N6-carboxylysine. Histidine 285 (proton acceptor) is an active-site residue. Residues arginine 286, histidine 318, and serine 370 each contribute to the substrate site.

This sequence belongs to the RuBisCO large chain family. Type I subfamily. Heterohexadecamer of 8 large chains and 8 small chains; disulfide-linked. The disulfide link is formed within the large subunit homodimers. It depends on Mg(2+) as a cofactor. Post-translationally, the disulfide bond which can form in the large chain dimeric partners within the hexadecamer appears to be associated with oxidative stress and protein turnover.

The protein localises to the plastid. It localises to the chloroplast. The enzyme catalyses 2 (2R)-3-phosphoglycerate + 2 H(+) = D-ribulose 1,5-bisphosphate + CO2 + H2O. It carries out the reaction D-ribulose 1,5-bisphosphate + O2 = 2-phosphoglycolate + (2R)-3-phosphoglycerate + 2 H(+). RuBisCO catalyzes two reactions: the carboxylation of D-ribulose 1,5-bisphosphate, the primary event in carbon dioxide fixation, as well as the oxidative fragmentation of the pentose substrate in the photorespiration process. Both reactions occur simultaneously and in competition at the same active site. The protein is Ribulose bisphosphate carboxylase large chain of Solandra grandiflora (Chalice vine).